Consider the following 177-residue polypeptide: Transcription antitermination protein NusB (177 aa).

Residues 1 to 36 form a disordered region; sequence MTEQPTKPTGSRPPRQPRTGLTSTGARKAGSKSDRS.

The protein belongs to the NusB family.

Involved in transcription antitermination. Required for transcription of ribosomal RNA (rRNA) genes. Binds specifically to the boxA antiterminator sequence of the ribosomal RNA (rrn) operons. The polypeptide is Transcription antitermination protein NusB (Albidiferax ferrireducens (strain ATCC BAA-621 / DSM 15236 / T118) (Rhodoferax ferrireducens)).